Here is a 148-residue protein sequence, read N- to C-terminus: Lysozyme C (148 aa).

The first 18 residues, Met1–Gly18, serve as a signal peptide directing secretion. Residues Lys19–Val148 enclose the C-type lysozyme domain. 4 cysteine pairs are disulfide-bonded: Cys24–Cys146, Cys48–Cys134, Cys83–Cys99, and Cys95–Cys113. Active-site residues include Glu53 and Asp71.

It belongs to the glycosyl hydrolase 22 family. As to quaternary structure, monomer.

The protein resides in the secreted. The catalysed reaction is Hydrolysis of (1-&gt;4)-beta-linkages between N-acetylmuramic acid and N-acetyl-D-glucosamine residues in a peptidoglycan and between N-acetyl-D-glucosamine residues in chitodextrins.. In terms of biological role, lysozymes have primarily a bacteriolytic function; those in tissues and body fluids are associated with the monocyte-macrophage system and enhance the activity of immunoagents. The chain is Lysozyme C (LYZ) from Pygathrix nemaeus (Red-shanked douc langur).